The primary structure comprises 452 residues: Lipase member H (452 aa).

A signal peptide spans 1 to 16 (MLRFYLFISLLCLVRS). N-linked (GlcNAc...) asparagine glycans are attached at residues asparagine 50, asparagine 66, and asparagine 122. The Nucleophile role is filled by serine 154. Catalysis depends on aspartate 178, which acts as the Charge relay system. Cysteine 233 and cysteine 247 are oxidised to a cystine. Residue histidine 249 is the Charge relay system of the active site. An N-linked (GlcNAc...) asparagine glycan is attached at asparagine 263. Cystine bridges form between cysteine 271–cysteine 282, cysteine 285–cysteine 293, and cysteine 428–cysteine 447.

This sequence belongs to the AB hydrolase superfamily. Lipase family. In terms of assembly, interacts with TTMP/C3orf52. In terms of tissue distribution, expressed in liver and lacrimal gland.

It is found in the secreted. The protein resides in the cell membrane. The enzyme catalyses 1-hexadecanoyl-2-(9Z-octadecenoyl)-sn-glycero-3-phosphate + H2O = 2-(9Z-octadecenoyl)-sn-glycero-3-phosphate + hexadecanoate + H(+). Its function is as follows. Hydrolyzes specifically phosphatidic acid (PA) to produce 2-acyl lysophosphatidic acid (LPA; a potent bioactive lipid mediator) and fatty acid. Does not hydrolyze other phospholipids, like phosphatidylserine (PS), phosphatidylcholine (PC) and phosphatidylethanolamine (PE) or triacylglycerol (TG). In Oryctolagus cuniculus (Rabbit), this protein is Lipase member H (LIPH).